A 185-amino-acid polypeptide reads, in one-letter code: Ribosome-recycling factor (185 aa).

It belongs to the RRF family.

It localises to the cytoplasm. Its function is as follows. Responsible for the release of ribosomes from messenger RNA at the termination of protein biosynthesis. May increase the efficiency of translation by recycling ribosomes from one round of translation to another. This chain is Ribosome-recycling factor, found in Thioalkalivibrio sulfidiphilus (strain HL-EbGR7).